We begin with the raw amino-acid sequence, 157 residues long: MKLHELSDNPGATKKRKRVGRGPGSGTGKMGGRGIKGQKSRSGVAINAYEGGQMPLYQRLPKRGFNKPNRKKFAVVNLGLIQKFIDAGKLDGKADITEDALVASGLVRRKLDGVRVLAKGDVSGKLNITVTGASKAAIDAVSAAGGALTVSAPAAAE.

The segment at 1-41 (MKLHELSDNPGATKKRKRVGRGPGSGTGKMGGRGIKGQKSR) is disordered. Residues 21-35 (RGPGSGTGKMGGRGI) show a composition bias toward gly residues.

The protein belongs to the universal ribosomal protein uL15 family. As to quaternary structure, part of the 50S ribosomal subunit.

Binds to the 23S rRNA. This chain is Large ribosomal subunit protein uL15, found in Jannaschia sp. (strain CCS1).